A 401-amino-acid chain; its full sequence is Chalcone synthase 6 (401 aa).

Cys168 is an active-site residue.

This sequence belongs to the thiolase-like superfamily. Chalcone/stilbene synthases family.

It catalyses the reaction (E)-4-coumaroyl-CoA + 3 malonyl-CoA + 3 H(+) = 2',4,4',6'-tetrahydroxychalcone + 3 CO2 + 4 CoA. It participates in secondary metabolite biosynthesis; flavonoid biosynthesis. The primary product of this enzyme is 4,2',4',6'-tetrahydroxychalcone (also termed naringenin-chalcone or chalcone) which can under specific conditions spontaneously isomerize into naringenin. This is Chalcone synthase 6 (CHS6) from Sorghum bicolor (Sorghum).